The sequence spans 338 residues: MVFTIKEIAQLIGGHVVGDASINIHKLCKIQEAIPGSITFLANPSYEKYLYTTQASAVIINNSFQPERSVSPSLILVEDPYASFTKLLAHYYQAVLNKHKVGVEEPAHLGKHVKLGNLVYRGAFSYIGDYVTLEDKVQIYPHTYIGDHVSIGENTIIYSGVKIYAGCQIGKNCIIHAGAVVGSNGFGFAPQPTGSYEKIPQVGGVILEDNIEIGANTTIDRATLGNTLIKQGTKIDNLVQIAHNVEVGKDTVIAALTGIAGSTKIGNNCMLGGQVGVAGHTEMGDRTVVAGQAGVTKSYKKGNVTLMGMPAIERKKYLKNYAIFKQLQNILQIKKDEQ.

His-243 acts as the Proton acceptor in catalysis.

Belongs to the transferase hexapeptide repeat family. LpxD subfamily. Homotrimer.

The catalysed reaction is a UDP-3-O-[(3R)-3-hydroxyacyl]-alpha-D-glucosamine + a (3R)-hydroxyacyl-[ACP] = a UDP-2-N,3-O-bis[(3R)-3-hydroxyacyl]-alpha-D-glucosamine + holo-[ACP] + H(+). The protein operates within bacterial outer membrane biogenesis; LPS lipid A biosynthesis. Functionally, catalyzes the N-acylation of UDP-3-O-acylglucosamine using 3-hydroxyacyl-ACP as the acyl donor. Is involved in the biosynthesis of lipid A, a phosphorylated glycolipid that anchors the lipopolysaccharide to the outer membrane of the cell. This is UDP-3-O-acylglucosamine N-acyltransferase from Amoebophilus asiaticus (strain 5a2).